Reading from the N-terminus, the 126-residue chain is C-type natriuretic peptide (126 aa).

Positions 1 to 23 (MHLSQLLACALLLALLSLRPSEA) are cleaved as a signal peptide. The tract at residues 20-71 (PSEAKPGAPPKVPRTPSGEEVAEPQAAGGGQKKGDKTPGGGGANLKDDRSRL) is disordered. Positions 24 to 73 (KPGAPPKVPRTPSGEEVAEPQAAGGGQKKGDKTPGGGGANLKDDRSRLLR) are excised as a propeptide. The segment covering 46-62 (AGGGQKKGDKTPGGGGA) has biased composition (gly residues). C110 and C126 form a disulfide bridge.

This sequence belongs to the natriuretic peptide family. In terms of processing, degraded by IDE (in vitro).

Its subcellular location is the secreted. Its function is as follows. Hormone which plays a role in endochondral ossification through regulation of cartilaginous growth plate chondrocytes proliferation and differentiation. May also be vasoactive and natriuretic. Acts by specifically binding and stimulating NPR2 to produce cGMP. Binds the clearance receptor NPR3. In Bos taurus (Bovine), this protein is C-type natriuretic peptide (NPPC).